A 207-amino-acid chain; its full sequence is uncharacterized protein (207 aa).

This sequence to M.leprae ML1660.

This is an uncharacterized protein from Mycobacterium tuberculosis (strain CDC 1551 / Oshkosh).